The following is a 239-amino-acid chain: Riboflavin synthase (239 aa).

Lumazine-binding repeat units follow at residues 1-105 (MFTG…MGGH) and 106-205 (VVQG…EKQI). 2,4-dihydroxypteridine is bound by residues 4-6 (GLV), 54-56 (CLT), 70-75 (GISPET), 109-111 (GHV), lysine 145, 154-156 (SLT), and 170-175 (SMVSYT).

In terms of assembly, homotrimer.

The enzyme catalyses 2 6,7-dimethyl-8-(1-D-ribityl)lumazine + H(+) = 5-amino-6-(D-ribitylamino)uracil + riboflavin. It functions in the pathway cofactor biosynthesis; riboflavin biosynthesis; riboflavin from 2-hydroxy-3-oxobutyl phosphate and 5-amino-6-(D-ribitylamino)uracil: step 2/2. In terms of biological role, catalyzes the dismutation of two molecules of 6,7-dimethyl-8-ribityllumazine, resulting in the formation of riboflavin and 5-amino-6-(D-ribitylamino)uracil. This chain is Riboflavin synthase (RIB5), found in Meyerozyma guilliermondii (strain ATCC 6260 / CBS 566 / DSM 6381 / JCM 1539 / NBRC 10279 / NRRL Y-324) (Yeast).